The primary structure comprises 130 residues: Small ribosomal subunit protein uS8 (130 aa).

It belongs to the universal ribosomal protein uS8 family. As to quaternary structure, part of the 30S ribosomal subunit. Contacts proteins S5 and S12.

Its function is as follows. One of the primary rRNA binding proteins, it binds directly to 16S rRNA central domain where it helps coordinate assembly of the platform of the 30S subunit. The polypeptide is Small ribosomal subunit protein uS8 (Yersinia enterocolitica serotype O:8 / biotype 1B (strain NCTC 13174 / 8081)).